We begin with the raw amino-acid sequence, 421 residues long: MEKFIIKGGNPLEGKITISGSKNSALPILAATLLTPEECVIHRVPNLSDIRYMLEILKFLGAQVHYEKGTVRIKSKIVHSTAPYDLVRKMRASICILGPLIARCGQARVSLPGGCVIGDRPIDLHITGLQKLGADIEIIKGDVVAHGGILRGTSINLKGKYGSTVLGTDNVMMAACQAEGTTIIEGAACEPEVEDLAHFLSSMGAKISGMGTQQLIIEGVKELHGCEYTIITDRIEAGTFAVAAAMTKGNLLLEHAPVEHMGSVLEKLKDCGASIEIESQGIRVSRSGPLRAFEIVTAAYPGFPTDMQAQFCAMATVAEGTSKIVENIFPNRFMHISELKRLGAMIELSQNQALIHGTERLSGAPVMASDLRASAALVLAGLVAENTTEVHRVYHIDRGYEKIDEKLSSVGANITRVYSKI.

22–23 provides a ligand contact to phosphoenolpyruvate; sequence KN. UDP-N-acetyl-alpha-D-glucosamine is bound at residue Arg91. The active-site Proton donor is Cys115. Residue Cys115 is modified to 2-(S-cysteinyl)pyruvic acid O-phosphothioketal. UDP-N-acetyl-alpha-D-glucosamine-binding positions include 120 to 124, Asp306, and Ile328; that span reads RPIDL.

This sequence belongs to the EPSP synthase family. MurA subfamily.

It is found in the cytoplasm. The enzyme catalyses phosphoenolpyruvate + UDP-N-acetyl-alpha-D-glucosamine = UDP-N-acetyl-3-O-(1-carboxyvinyl)-alpha-D-glucosamine + phosphate. It functions in the pathway cell wall biogenesis; peptidoglycan biosynthesis. Functionally, cell wall formation. Adds enolpyruvyl to UDP-N-acetylglucosamine. The polypeptide is UDP-N-acetylglucosamine 1-carboxyvinyltransferase (Methylacidiphilum infernorum (isolate V4) (Methylokorus infernorum (strain V4))).